We begin with the raw amino-acid sequence, 176 residues long: MVTFSHVSSLSHWFLLLLLLNLFLPVIFAMPESYSFNCPDGEYQSNDVCCKTCPSGTFVKAPCKIPHTQGQCEKCHPGTFTGKDNGLHDCELCSTCDKDQNMVADCSATSDRKCECQIGLYYYDPKFPESCRPCTKCPQGIPVLQECNSTANTVCSSSVSNPRNWLFLLMLIVFCI.

The signal sequence occupies residues 1–29 (MVTFSHVSSLSHWFLLLLLLNLFLPVIFA). TNFR-Cys repeat units follow at residues 37 to 72 (NCPD…QGQC), 74 to 114 (KCHP…DRKC), and 115 to 155 (ECQI…NTVC). 9 disulfides stabilise this stretch: Cys38–Cys49, Cys50–Cys63, Cys53–Cys72, Cys75–Cys90, Cys93–Cys106, Cys96–Cys114, Cys116–Cys131, Cys134–Cys147, and Cys137–Cys155. An N-linked (GlcNAc...) asparagine glycan is attached at Asn148. Cys155 carries the GPI-anchor amidated cysteine lipid modification. Residues 156-176 (SSSVSNPRNWLFLLMLIVFCI) constitute a propeptide, removed in mature form.

Ubiquitous.

It is found in the cell membrane. Its function is as follows. Receptor for the cytotoxic ligand TRAIL. Lacks a cytoplasmic death domain and hence is not capable of inducing apoptosis. May protect cells against TRAIL mediated apoptosis through ligand competition. Cannot induce the NF-kappa-B pathway. The polypeptide is Tumor necrosis factor receptor superfamily member 23 (Tnfrsf23) (Mus musculus (Mouse)).